A 35-amino-acid chain; its full sequence is Photosystem II reaction center protein T (35 aa).

The helical transmembrane segment at 3–23 (ALVYTFLLXSTLGIIFFAIFF) threads the bilayer.

It belongs to the PsbT family. As to quaternary structure, PSII is composed of 1 copy each of membrane proteins PsbA, PsbB, PsbC, PsbD, PsbE, PsbF, PsbH, PsbI, PsbJ, PsbK, PsbL, PsbM, PsbT, PsbY, PsbZ, Psb30/Ycf12, at least 3 peripheral proteins of the oxygen-evolving complex and a large number of cofactors. It forms dimeric complexes.

Its subcellular location is the plastid. The protein resides in the chloroplast thylakoid membrane. Found at the monomer-monomer interface of the photosystem II (PS II) dimer, plays a role in assembly and dimerization of PSII. PSII is a light-driven water plastoquinone oxidoreductase, using light energy to abstract electrons from H(2)O, generating a proton gradient subsequently used for ATP formation. The sequence is that of Photosystem II reaction center protein T from Cunninghamia lanceolata (China fir).